A 672-amino-acid polypeptide reads, in one-letter code: Spermatid perinuclear RNA-binding protein (672 aa).

A DZF domain is found at Arg-5–Leu-363. Disordered stretches follow at residues Thr-52–Tyr-73 and Gly-349–Lys-371. Residues Arg-357–Lys-371 are compositionally biased toward basic and acidic residues. The DRBM 1 domain maps to Asp-387–Tyr-453. Positions Ser-466–Asn-476 are enriched in basic and acidic residues. The tract at residues Ser-466 to Glu-499 is disordered. Residues Glu-477–Thr-497 are compositionally biased toward low complexity. In terms of domain architecture, DRBM 2 spans Ser-510–Ser-576. 2 positions are modified to asymmetric dimethylarginine: Arg-612 and Arg-617.

As to quaternary structure, interacts with EIF2AK2. Associates with microtubules; it is unsure whether such interaction is direct or indirect.

Its subcellular location is the cytoplasm. Functionally, involved in spermatogenesis and sperm function. Plays a role in regulation of cell growth. Binds to double-stranded DNA and RNA. Binds most efficiently to poly(I:C) RNA than to poly(dI:dC) DNA. Binds also to single-stranded poly(G) RNA. Binds non-specifically to the mRNA PRM1 3'-UTR and adenovirus VA RNA. This chain is Spermatid perinuclear RNA-binding protein (STRBP), found in Homo sapiens (Human).